A 152-amino-acid polypeptide reads, in one-letter code: Transcriptional regulator MraZ (152 aa).

2 SpoVT-AbrB domains span residues 5–52 and 81–124; these read TSAI…PLPE and ASDC…HDTA.

Belongs to the MraZ family. In terms of assembly, forms oligomers.

The protein localises to the cytoplasm. The protein resides in the nucleoid. This Colwellia psychrerythraea (strain 34H / ATCC BAA-681) (Vibrio psychroerythus) protein is Transcriptional regulator MraZ.